We begin with the raw amino-acid sequence, 265 residues long: Cytochrome c oxidase subunit 3 (265 aa).

Transmembrane regions (helical) follow at residues 16–36 (PWPF…ILWL), 40–60 (PSFL…FSWW), 83–103 (CVAL…WTFF), 159–179 (VGPF…FLVQ), 198–218 (VFYL…IWLM), and 241–261 (IWYW…VYVW).

Belongs to the cytochrome c oxidase subunit 3 family. Component of the cytochrome c oxidase (complex IV, CIV), a multisubunit enzyme composed of a catalytic core of 3 subunits and several supernumerary subunits. The complex exists as a monomer or a dimer and forms supercomplexes (SCs) in the inner mitochondrial membrane with ubiquinol-cytochrome c oxidoreductase (cytochrome b-c1 complex, complex III, CIII).

Its subcellular location is the mitochondrion inner membrane. The catalysed reaction is 4 Fe(II)-[cytochrome c] + O2 + 8 H(+)(in) = 4 Fe(III)-[cytochrome c] + 2 H2O + 4 H(+)(out). Functionally, component of the cytochrome c oxidase, the last enzyme in the mitochondrial electron transport chain which drives oxidative phosphorylation. The respiratory chain contains 3 multisubunit complexes succinate dehydrogenase (complex II, CII), ubiquinol-cytochrome c oxidoreductase (cytochrome b-c1 complex, complex III, CIII) and cytochrome c oxidase (complex IV, CIV), that cooperate to transfer electrons derived from NADH and succinate to molecular oxygen, creating an electrochemical gradient over the inner membrane that drives transmembrane transport and the ATP synthase. Cytochrome c oxidase is the component of the respiratory chain that catalyzes the reduction of oxygen to water. Electrons originating from reduced cytochrome c in the intermembrane space (IMS) are transferred via the dinuclear copper A center (CU(A)) of subunit 2 and heme A of subunit 1 to the active site in subunit 1, a binuclear center (BNC) formed by heme A3 and copper B (CU(B)). The BNC reduces molecular oxygen to 2 water molecules using 4 electrons from cytochrome c in the IMS and 4 protons from the mitochondrial matrix. The sequence is that of Cytochrome c oxidase subunit 3 (COIII) from Mytilus edulis (Blue mussel).